We begin with the raw amino-acid sequence, 288 residues long: Elongation factor Ts (288 aa).

The interval 80–83 is involved in Mg(2+) ion dislocation from EF-Tu; the sequence is TDFV.

The protein belongs to the EF-Ts family.

It is found in the cytoplasm. Associates with the EF-Tu.GDP complex and induces the exchange of GDP to GTP. It remains bound to the aminoacyl-tRNA.EF-Tu.GTP complex up to the GTP hydrolysis stage on the ribosome. The chain is Elongation factor Ts from Chromobacterium violaceum (strain ATCC 12472 / DSM 30191 / JCM 1249 / CCUG 213 / NBRC 12614 / NCIMB 9131 / NCTC 9757 / MK).